The primary structure comprises 307 residues: uncharacterized protein (307 aa).

The EAL domain occupies Arg-54–Glu-307. The next 2 helical transmembrane spans lie at Pro-158–Leu-178 and Ala-203–Leu-223.

Its subcellular location is the cell membrane. This is an uncharacterized protein from Mycobacterium tuberculosis (strain CDC 1551 / Oshkosh).